The following is a 141-amino-acid chain: Transcription antitermination protein NusB (141 aa).

This sequence belongs to the NusB family.

In terms of biological role, involved in transcription antitermination. Required for transcription of ribosomal RNA (rRNA) genes. Binds specifically to the boxA antiterminator sequence of the ribosomal RNA (rrn) operons. This Neisseria meningitidis serogroup A / serotype 4A (strain DSM 15465 / Z2491) protein is Transcription antitermination protein NusB.